A 179-amino-acid chain; its full sequence is ADP-ribosylation factor-like protein 5A (179 aa).

Residue glycine 2 is the site of N-myristoyl glycine attachment. Residues 23–30 (GLDNAGKT), 66–70 (DIGGQ), 125–128 (NKQD), and alanine 159 contribute to the GTP site.

It belongs to the small GTPase superfamily. Arf family.

In terms of biological role, lacks ADP-ribosylation enhancing activity. This Mus musculus (Mouse) protein is ADP-ribosylation factor-like protein 5A (Arl5a).